The following is a 154-amino-acid chain: Myoglobin (154 aa).

One can recognise a Globin domain in the interval 2–148 (GLSDGEWHLV…FRNDIAAKIK (147 aa)). Position 4 is a phosphoserine (serine 4). Residue histidine 65 coordinates nitrite. Histidine 65 is an O2 binding site. Position 68 is a phosphothreonine (threonine 68). Histidine 94 lines the heme b pocket.

The protein belongs to the globin family. In terms of assembly, monomeric.

The protein resides in the cytoplasm. Its subcellular location is the sarcoplasm. It catalyses the reaction Fe(III)-heme b-[protein] + nitric oxide + H2O = Fe(II)-heme b-[protein] + nitrite + 2 H(+). It carries out the reaction H2O2 + AH2 = A + 2 H2O. Its function is as follows. Monomeric heme protein which primary function is to store oxygen and facilitate its diffusion within muscle tissues. Reversibly binds oxygen through a pentacoordinated heme iron and enables its timely and efficient release as needed during periods of heightened demand. Depending on the oxidative conditions of tissues and cells, and in addition to its ability to bind oxygen, it also has a nitrite reductase activity whereby it regulates the production of bioactive nitric oxide. Under stress conditions, like hypoxia and anoxia, it also protects cells against reactive oxygen species thanks to its pseudoperoxidase activity. The protein is Myoglobin (MB) of Pusa sibirica (Baikal seal).